Consider the following 591-residue polypeptide: 2-succinyl-5-enolpyruvyl-6-hydroxy-3-cyclohexene-1-carboxylate synthase (591 aa).

Belongs to the TPP enzyme family. MenD subfamily. In terms of assembly, homodimer. It depends on Mg(2+) as a cofactor. Requires Mn(2+) as cofactor. Thiamine diphosphate is required as a cofactor.

The enzyme catalyses isochorismate + 2-oxoglutarate + H(+) = 5-enolpyruvoyl-6-hydroxy-2-succinyl-cyclohex-3-ene-1-carboxylate + CO2. The protein operates within quinol/quinone metabolism; 1,4-dihydroxy-2-naphthoate biosynthesis; 1,4-dihydroxy-2-naphthoate from chorismate: step 2/7. Its pathway is cofactor biosynthesis; phylloquinone biosynthesis. Functionally, catalyzes the thiamine diphosphate-dependent decarboxylation of 2-oxoglutarate and the subsequent addition of the resulting succinic semialdehyde-thiamine pyrophosphate anion to isochorismate to yield 2-succinyl-5-enolpyruvyl-6-hydroxy-3-cyclohexene-1-carboxylate (SEPHCHC). This Rippkaea orientalis (strain PCC 8801 / RF-1) (Cyanothece sp. (strain PCC 8801)) protein is 2-succinyl-5-enolpyruvyl-6-hydroxy-3-cyclohexene-1-carboxylate synthase.